The following is a 530-amino-acid chain: Chaperone Ric-8A (530 aa).

A Phosphoserine; by CK2 modification is found at serine 435. Threonine 440 carries the phosphothreonine; by CK2 modification. Threonine 442 is modified (phosphothreonine). Serine 501, serine 522, serine 523, and serine 527 each carry phosphoserine.

This sequence belongs to the synembryn family. Interacts with GDP-bound G alpha proteins GNAI1, GNAO1 and GNAQ, and with GNA13 with lower affinity. Does not interact with G-alpha proteins when they are in complex with subunits beta and gamma. Interacts (via C-terminus) with RGS14; the interaction stimulates the dissociation of the complex between RGS14 and the active GTP-bound form of GNAI1. Interacts with NCS1; interaction is favored in the absence of Ca(2+) and myristoylation of NCS1 is not required. Post-translationally, phosphorylated at Ser-435 and Thr-440 by CK2, stabilizing its interface with G alpha proteins.

It localises to the cytoplasm. The protein localises to the cell cortex. In terms of biological role, chaperone that specifically binds and folds nascent G alpha proteins prior to G protein heterotrimer formation, promoting their stability and activity: folds GNAI1, GNAO1, GNA13 and GNAQ. Does not fold G(s) G-alpha proteins GNAS nor GNAL. Also acts as a guanine nucleotide exchange factor (GEF) for G alpha proteins by stimulating exchange of bound GDP for free GTP. Involved in regulation of microtubule pulling forces during mitotic movement of chromosomes by stimulating G(i)-alpha protein (GNAI1), possibly leading to release G(i)-alpha-GTP and NuMA proteins from the NuMA-GPSM2-G(i)-alpha-GDP complex. Also acts as an activator for G(q)-alpha (GNAQ) protein by enhancing the G(q)-coupled receptor-mediated ERK activation. This is Chaperone Ric-8A from Rattus norvegicus (Rat).